The following is a 155-amino-acid chain: Endoribonuclease YbeY (155 aa).

3 residues coordinate Zn(2+): His114, His118, and His124.

Belongs to the endoribonuclease YbeY family. Zn(2+) is required as a cofactor.

It localises to the cytoplasm. Its function is as follows. Single strand-specific metallo-endoribonuclease involved in late-stage 70S ribosome quality control and in maturation of the 3' terminus of the 16S rRNA. This Enterobacter sp. (strain 638) protein is Endoribonuclease YbeY.